The sequence spans 415 residues: 2-oxoadipate dioxygenase/decarboxylase (415 aa).

2-oxoadipate contacts are provided by H66, R70, and H225. H66 serves as a coordination point for Fe(2+). Fe(2+) is bound by residues H225 and E296. A361 serves as a coordination point for 2-oxoadipate.

It belongs to the 2-oxoadipate dioxygenase/decarboxylase family. It depends on Fe(2+) as a cofactor.

It carries out the reaction 2-oxoadipate + O2 = (R)-2-hydroxyglutarate + CO2. Its function is as follows. Catalyzes the decarboxylation and hydroxylation of 2-oxoadipate (2OA) to form D-2-hydroxyglutarate (D-2-HGA). The polypeptide is 2-oxoadipate dioxygenase/decarboxylase (Mycobacterium bovis (strain ATCC BAA-935 / AF2122/97)).